A 176-amino-acid chain; its full sequence is Peptidyl-prolyl cis-trans isomerase CYP19-3 (176 aa).

Positions 7–170 constitute a PPIase cyclophilin-type domain; the sequence is FFDILIGKMK…ERVVIEDCGE (164 aa).

Belongs to the cyclophilin-type PPIase family. As to expression, ubiquitous, with highest levels in flowers and lowest levels in roots.

The protein localises to the cytoplasm. The enzyme catalyses [protein]-peptidylproline (omega=180) = [protein]-peptidylproline (omega=0). Its activity is regulated as follows. Binds cyclosporin A (CsA). CsA mediates some of its effects via an inhibitory action on PPIase. In terms of biological role, PPIases accelerate the folding of proteins. It catalyzes the cis-trans isomerization of proline imidic peptide bonds in oligopeptides. This Arabidopsis thaliana (Mouse-ear cress) protein is Peptidyl-prolyl cis-trans isomerase CYP19-3 (CYP19-3).